A 210-amino-acid polypeptide reads, in one-letter code: Cell division protein SepF (210 aa).

Composition is skewed to low complexity over residues 36–47 (QQQQTPAAVPTQ) and 59–69 (RASATTATTAS). 2 disordered regions span residues 36–69 (QQQQ…TTAS) and 182–210 (NEMS…QMIQ).

The protein belongs to the SepF family. In terms of assembly, homodimer. Interacts with FtsZ.

It is found in the cytoplasm. In terms of biological role, cell division protein that is part of the divisome complex and is recruited early to the Z-ring. Probably stimulates Z-ring formation, perhaps through the cross-linking of FtsZ protofilaments. Its function overlaps with FtsA. The chain is Cell division protein SepF from Trichodesmium erythraeum (strain IMS101).